We begin with the raw amino-acid sequence, 2345 residues long: Acetyl-CoA carboxylase 1 (2345 aa).

Residue methionine 1 is modified to N-acetylmethionine. Phosphoserine occurs at positions 5, 23, 25, 29, 34, 47, 49, and 52. A Phosphothreonine modification is found at threonine 57. Serine 77 and serine 79 each carry phosphoserine. Serine 79 carries the post-translational modification Phosphoserine; by AMPK. A Biotin carboxylation domain is found at 116-617; that stretch reads VIEKVLIANN…DTGWLDRLIA (502 aa). An ATP-grasp domain is found at 274–465; that stretch reads SKRILNVPQD…LPAAQLQIAM (192 aa). Position 300–357 (300–357) interacts with ATP; that stretch reads AEEVGYPVMIKASEGGGGKGIRKVNNADDFPNLFRQVQAEVPGSPIFVMRLAKQSRHL. Residues glutamate 423, glutamate 436, and asparagine 438 each coordinate Mg(2+). Mn(2+) contacts are provided by glutamate 423, glutamate 436, and asparagine 438. Arginine 440 is an active-site residue. A Phosphothreonine modification is found at threonine 609. The 75-residue stretch at 744–818 folds into the Biotinyl-binding domain; the sequence is FEKENDPSVM…DPGCVIAKMQ (75 aa). An N6-biotinyllysine modification is found at lysine 785. Phosphoserine is present on residues serine 834, serine 1200, serine 1215, and serine 1217. At threonine 1226 the chain carries Phosphothreonine. A phosphoserine mark is found at serine 1258, serine 1262, and serine 1272. Lysine 1333 is modified (N6-acetyllysine). The region spanning 1575-1913 is the CoA carboxyltransferase N-terminal domain; that stretch reads PYVTKDLLQS…SVHSSVPLLN (339 aa). The segment at 1575-2233 is carboxyltransferase; the sequence is PYVTKDLLQS…EDLVKKKIHN (659 aa). CoA contacts are provided by arginine 1822, lysine 2126, and arginine 2128. The CoA carboxyltransferase C-terminal domain occupies 1917-2233; it reads PIDRIIEFVP…EDLVKKKIHN (317 aa). The residue at position 2152 (threonine 2152) is a Phosphothreonine.

As to quaternary structure, monomer, homodimer, and homotetramer. Can form filamentous polymers. Interacts in its inactive phosphorylated form with the BRCT domains of BRCA1 which prevents ACACA dephosphorylation and inhibits lipid synthesis. Interacts with MID1IP1; interaction with MID1IP1 promotes oligomerization and increases its activity. The cofactor is Mg(2+). Mn(2+) is required as a cofactor. Requires biotin as cofactor. Post-translationally, phosphorylation on Ser-1262 is required for interaction with BRCA1. Phosphorylation at Ser-79 by AMPK inactivates enzyme activity. In terms of processing, the biotin cofactor is covalently attached to the central biotinyl-binding domain and is required for the catalytic activity.

The protein localises to the cytoplasm. It is found in the cytosol. The enzyme catalyses hydrogencarbonate + acetyl-CoA + ATP = malonyl-CoA + ADP + phosphate + H(+). It functions in the pathway lipid metabolism; malonyl-CoA biosynthesis; malonyl-CoA from acetyl-CoA: step 1/1. With respect to regulation, inhibited by phosphorylation. Citrate promotes oligomerization of the protein into filaments that correspond to the most active form of the carboxylase. In terms of biological role, cytosolic enzyme that catalyzes the carboxylation of acetyl-CoA to malonyl-CoA, the first and rate-limiting step of de novo fatty acid biosynthesis. This is a 2 steps reaction starting with the ATP-dependent carboxylation of the biotin carried by the biotin carboxyl carrier (BCC) domain followed by the transfer of the carboxyl group from carboxylated biotin to acetyl-CoA. In Mus musculus (Mouse), this protein is Acetyl-CoA carboxylase 1.